The sequence spans 379 residues: 3-dehydroquinate synthase (379 aa).

NAD(+) is bound by residues 113–117, 137–138, lysine 150, and lysine 159; these read GVIGD and TS. Residues glutamate 192, histidine 256, and histidine 274 each coordinate Zn(2+).

This sequence belongs to the sugar phosphate cyclases superfamily. Dehydroquinate synthase family. Co(2+) serves as cofactor. It depends on Zn(2+) as a cofactor. Requires NAD(+) as cofactor.

Its subcellular location is the cytoplasm. The catalysed reaction is 7-phospho-2-dehydro-3-deoxy-D-arabino-heptonate = 3-dehydroquinate + phosphate. Its pathway is metabolic intermediate biosynthesis; chorismate biosynthesis; chorismate from D-erythrose 4-phosphate and phosphoenolpyruvate: step 2/7. Its function is as follows. Catalyzes the conversion of 3-deoxy-D-arabino-heptulosonate 7-phosphate (DAHP) to dehydroquinate (DHQ). In Zymomonas mobilis subsp. mobilis (strain ATCC 31821 / ZM4 / CP4), this protein is 3-dehydroquinate synthase.